The chain runs to 837 residues: Protein TRANSPARENT TESTA 9 (837 aa).

Residues 42-192 (LRSIAEILTY…AVRALTLNVY (151 aa)) form the FPL domain. The disordered stretch occupies residues 366-386 (TEEANQQCSSTAAGMSDDGNS). The segment covering 368–378 (EANQQCSSTAA) has biased composition (polar residues).

It belongs to the CLEC16A/gop-1 family.

The protein resides in the golgi apparatus membrane. In terms of biological role, involved in membrane trafficking and vacuole development through membrane fusion at the vacuole. Required for membrane trafficking machinery and accumulation of flavonoids in the seed coat. The protein is Protein TRANSPARENT TESTA 9 of Arabidopsis thaliana (Mouse-ear cress).